Here is a 103-residue protein sequence, read N- to C-terminus: Large ribosomal subunit protein eL14 (103 aa).

This sequence belongs to the eukaryotic ribosomal protein eL14 family.

In Pyrobaculum arsenaticum (strain DSM 13514 / JCM 11321 / PZ6), this protein is Large ribosomal subunit protein eL14.